The chain runs to 438 residues: 3-phosphoshikimate 1-carboxyvinyltransferase (438 aa).

3-phosphoshikimate is bound by residues Lys-21, Ser-22, and Arg-26. Lys-21 is a binding site for phosphoenolpyruvate. Phosphoenolpyruvate contacts are provided by Gly-95 and Arg-123. Residues Ser-167, Gln-169, Asp-315, and Lys-342 each contribute to the 3-phosphoshikimate site. Gln-169 serves as a coordination point for phosphoenolpyruvate. The Proton acceptor role is filled by Asp-315. Phosphoenolpyruvate is bound by residues Arg-346 and Arg-387.

Belongs to the EPSP synthase family. In terms of assembly, monomer.

It is found in the cytoplasm. It catalyses the reaction 3-phosphoshikimate + phosphoenolpyruvate = 5-O-(1-carboxyvinyl)-3-phosphoshikimate + phosphate. The protein operates within metabolic intermediate biosynthesis; chorismate biosynthesis; chorismate from D-erythrose 4-phosphate and phosphoenolpyruvate: step 6/7. Its function is as follows. Catalyzes the transfer of the enolpyruvyl moiety of phosphoenolpyruvate (PEP) to the 5-hydroxyl of shikimate-3-phosphate (S3P) to produce enolpyruvyl shikimate-3-phosphate and inorganic phosphate. The chain is 3-phosphoshikimate 1-carboxyvinyltransferase from Coxiella burnetii (strain RSA 331 / Henzerling II).